Reading from the N-terminus, the 999-residue chain is Protein Smaug (999 aa).

Polar residues predominate over residues 1-36 (MKYATGTDNAMTSGISGQTNNSNSASNEMQPTTSTP). Disordered stretches follow at residues 1-69 (MKYA…QSQP) and 329-349 (LCPA…IAPP). Low complexity-rich tracts occupy residues 44 to 69 (TSTA…QSQP) and 329 to 338 (LCPASGSRSS). A phosphoserine mark is found at serine 564 and serine 575. The interval 583–763 (EFKPNYIKFH…KDLKFKLSKM (181 aa)) is interaction with cup. An SAM domain is found at 600 to 654 (GIGLWLKSLRLHKYIELFKNMTYEEMLLITEDFLQSVGVTKGASHKLALCIDKLK). Disordered stretches follow at residues 773-892 (HVKP…MQQM) and 955-977 (QQSQ…EQQP). Composition is skewed to polar residues over residues 801–822 (KNGS…NFSL) and 854–864 (HQPQYKSSSYP). Phosphoserine is present on serine 972.

It belongs to the SMAUG family. As to quaternary structure, interacts with oskar (osk). Binds to the 3'-UTR of nanos (nos). Interacts with cup, which in turn recruits eIF4-E, leading to an indirect interaction between smg and eIF4-E that prevents mRNA translation. Forms a complex with aub, twin, AGO3, nanos mRNA and piRNAs that targets the nanos 3'-untranslated region, in early embryos. At syncytial blastoderm, it is located throughout the bulk cytoplasm and pole plasm. By the time of cellularization, it concentrates at the posterior pole.

Its subcellular location is the cytoplasm. In terms of biological role, translation regulator that binds to the 3'-UTR of specific mRNAs such as nanos (nos) and prevents their translation. Prevents translation of unlocalized nanos in the bulk cytoplasm via the recruitment of cup. This is Protein Smaug (smg) from Drosophila melanogaster (Fruit fly).